Reading from the N-terminus, the 482-residue chain is Nuclear transcription factor Y subunit nfya-1 (482 aa).

Residues Met-1–Pro-160 form a disordered region. The segment covering Ser-72–Ala-93 has biased composition (polar residues). Over residues Ser-94–Pro-110 the composition is skewed to low complexity. Polar residues-rich tracts occupy residues His-126 to Ile-135 and Val-144 to Pro-160. The Subunit association domain (SAD) motif lies at Leu-306 to Gly-329. The NFYA/HAP2-type DNA-binding region spans Gln-336–Thr-361. Positions His-344 to Ser-414 are disordered. Positions Gly-353–Lys-362 are enriched in basic and acidic residues. Residues Thr-363 to Ser-375 show a composition bias toward low complexity.

It belongs to the NFYA/HAP2 subunit family. As to quaternary structure, forms a heterotrimeric transcription factor complex (nfya-1-NF-Y complex) composed of nfya-1, nfyb-1 and nfyc-1, which binds to 5'-CCAAT-3' box motif in the promoters of its target genes. Interacts with the nfyb-1 and nfyc-1 dimer; the interaction is required for subsequent binding to the 5'-CCAAT-3' box motif in DNA. Does not interact with either nfyb-1 or nfyc-1 in their monomeric form. Interacts with mes-3. In terms of tissue distribution, expressed in certain parts of the gonads with high expression in fertilized oocytes in the uterus and mature oocytes from the distal to the proximal arm of the gonad, but weak expression in the syncytial ovaries and immature oocytes at the beginning of the proximal arm of the gonad. Highly expressed in the head ganglia neurons and the developing hermaphrodite vulva and male tail. Weakly expressed in most somatic cells. Not expressed in the intestine, the hypodermis, body wall muscle surrounding the pseudocoelomic space, secretory cells in the pharyngeal terminal bulb wall, in the small ganglia surrounding the pharynx and in the neurons running anteriorly to the sensory organs in the head.

Its subcellular location is the nucleus. Functionally, component of the sequence-specific heterotrimeric transcription factor (nfya-1-NF-Y) which specifically recognizes a 5'-CCAAT-3' box motif found in the promoters of its target genes to regulate their expression and control cellular identity in particular tissue types. In association with the components in the nfya-1-NF-Y complex, represses the expression of the T-box transcription factor tbx-2 throughout larval development, which most likely restricts its expression to certain tissues. May act to repress txb-2 expression in conjunction with tbx-2 itself, which has an autoregulatory role. With the components in this complex, negatively regulates the expression of the homeobox protein egl-5 to spatially restrict its expression in tissues such as the head. May regulate egl-5 expression in association with the mes-2-mes-3-mes-6 complex. This is Nuclear transcription factor Y subunit nfya-1 from Caenorhabditis elegans.